The following is a 35-amino-acid chain: ECRYWLGGCSAGQTCCKHLVCSRRHGWCVWDGTFS.

Disulfide bonds link C2-C16, C9-C21, and C15-C28.

Belongs to the neurotoxin 10 (Hwtx-1) family. 54 (ProTx-1) subfamily. In terms of processing, an unnatural amidation at Ser-35 provokes a 14-fold increased toxin ability to inhibit Nav1.2/SCN2A and a ~2-fold decreased toxin ability to inhibit both Nav1.5/SCN5A and Nav1.7/SCN9A. In terms of tissue distribution, expressed by the venom gland.

It is found in the secreted. Its function is as follows. Ion channel impairing toxin that inhibits voltage-gated calcium channel Cav3.1/CACNA1G (IC(50)=53 nM), voltage-gated potassium channels Kv2.1/KCNB1 (IC(50)=411 nM), all sodium channels tested (Nav1.2/SCN2A (IC(50)=60-104 nM), Nav1.5/SCN5A (IC(50)=76-358 nM), Nav1.6/SCN8A (IC(50)=21-133 nM), Nav1.7/SCN9A (IC(50)=51-95 nM), and Nav1.8/SCN10A) as well as the nociceptor cation channel TRPA1 (IC(50)=389 nM). Acts as a potent and selective blocker of voltage-gated calcium channel Cav3.1/CACNA1G, but not of Cav3.2/CACNA1H, and Cav3.3/CACNA1I. On Nav1.7/SCN9A, primarily interacts with the DII and DIV voltage-sensor domains. Also acts as an inhibitor of nociceptor cation channel TRPA1 (IC(50)~389 nM) by binding to the S1-S4 gating domain of TRPA1. It shows moderate affinity for lipid bilayers. The chain is Beta/omega-theraphotoxin-Bp1a from Bumba pulcherrimaklaasi (Tarantula spider).